A 151-amino-acid polypeptide reads, in one-letter code: UPF0208 membrane protein YfbV (151 aa).

2 consecutive transmembrane segments (helical) span residues Tyr-46–Leu-65 and Leu-69–Gly-91.

It belongs to the UPF0208 family.

It localises to the cell inner membrane. The polypeptide is UPF0208 membrane protein YfbV (Shigella flexneri serotype 5b (strain 8401)).